The chain runs to 915 residues: MVQLRKLLRVLTLMKFPCCVLEVLLCALAAAARGQEMYAPHSIRIEGDVTLGGLFPVHAKGPSGVPCGDIKRENGIHRLEAMLYALDQINSDPNLLPNVTLGARILDTCSRDTYALEQSLTFVQALIQKDTSDVRCTNGEPPVFVKPEKVVGVIGASGSSVSIMVANILRLFQIPQISYASTAPELSDDRRYDFFSRVVPPDSFQAQAMVDIVKALGWNYVSTLASEGSYGEKGVESFTQISKEAGGLCIAQSVRIPQERKDRTIDFDRIIKQLLDTPNSRAVVIFANDEDIKQILAAAKRADQVGHFLWVGSDSWGSKINPLHQHEDIAEGAITIQPKRATVEGFDAYFTSRTLENNRRNVWFAEYWEENFNCKLTISGSKKEDTDRKCTGQERIGKDSNYEQEGKVQFVIDAVYAMAHALHHMNKDLCADYRGVCPEMEQAGGKKLLKYIRNVNFNGSAGTPVMFNKNGDAPGRYDIFQYQTTNTSNPGYRLIGQWTDELQLNIEDMQWGKGVREIPASVCTLPCKPGQRKKTQKGTPCCWTCEPCDGYQYQFDEMTCQHCPYDQRPNENRTGCQDIPIIKLEWHSPWAVIPVFLAMLGIIATIFVMATFIRYNDTPIVRASGRELSYVLLTGIFLCYIITFLMIAKPDVAVCSFRRVFLGLGMCISYAALLTKTNRIYRIFEQGKKSVTAPRLISPTSQLAITSSLISVQLLGVFIWFGVDPPNIIIDYDEHKTMNPEQARGVLKCDITDLQIICSLGYSILLMVTCTVYAIKTRGVPENFNEAKPIGFTMYTTCIVWLAFIPIFFGTAQSAEKLYIQTTTLTISMNLSASVALGMLYMPKVYIIIFHPELNVQKRKRSFKAVVTAATMSSRLSHKPSDRPNGEAKTELCENVDPNSPAAKKKYVSYNNLVI.

A signal peptide spans 1 to 34 (MVQLRKLLRVLTLMKFPCCVLEVLLCALAAAARG). Residues 35-590 (QEMYAPHSIR…IIKLEWHSPW (556 aa)) are Extracellular-facing. A disulfide bond links Cys67 and Cys109. An N-linked (GlcNAc...) asparagine glycan is attached at Asn98. L-glutamate-binding positions include Ser159, 180–182 (AST), Tyr230, and Asp314. Intrachain disulfides connect Cys249–Cys541, Cys374–Cys390, Cys430–Cys437, Cys523–Cys542, Cys527–Cys545, Cys548–Cys560, and Cys563–Cys576. Lys407 contacts L-glutamate. Asn458 and Asn486 each carry an N-linked (GlcNAc...) asparagine glycan. Residue Asn572 is glycosylated (N-linked (GlcNAc...) asparagine). Residues 591 to 615 (AVIPVFLAMLGIIATIFVMATFIRY) form a helical membrane-spanning segment. Topologically, residues 616–627 (NDTPIVRASGRE) are cytoplasmic. A helical membrane pass occupies residues 628-648 (LSYVLLTGIFLCYIITFLMIA). Topologically, residues 649-654 (KPDVAV) are extracellular. A helical membrane pass occupies residues 655-675 (CSFRRVFLGLGMCISYAALLT). Topologically, residues 676–702 (KTNRIYRIFEQGKKSVTAPRLISPTSQ) are cytoplasmic. The chain crosses the membrane as a helical span at residues 703 to 723 (LAITSSLISVQLLGVFIWFGV). At 724 to 753 (DPPNIIIDYDEHKTMNPEQARGVLKCDITD) the chain is on the extracellular side. Residues 754–775 (LQIICSLGYSILLMVTCTVYAI) traverse the membrane as a helical segment. Over 776–788 (KTRGVPENFNEAK) the chain is Cytoplasmic. The helical transmembrane segment at 789–810 (PIGFTMYTTCIVWLAFIPIFFG) threads the bilayer. Over 811 to 825 (TAQSAEKLYIQTTTL) the chain is Extracellular. The chain crosses the membrane as a helical span at residues 826 to 850 (TISMNLSASVALGMLYMPKVYIIIF). At 851-915 (HPELNVQKRK…KYVSYNNLVI (65 aa)) the chain is on the cytoplasmic side. The segment at 874 to 895 (SRLSHKPSDRPNGEAKTELCEN) is disordered. Positions 879–892 (KPSDRPNGEAKTEL) are enriched in basic and acidic residues. Residue Ser900 is modified to Phosphoserine.

Belongs to the G-protein coupled receptor 3 family. In terms of assembly, homodimer. Interacts with PICK1. N-glycosylated. As to expression, expressed in many areas of the brain, especially in the cerebral cortex, hippocampus, and cerebellum. Expression of GRM7 isoforms in non-neuronal tissues appears to be restricted to isoform 3 and isoform 4.

Its subcellular location is the cell membrane. In terms of biological role, G-protein coupled receptor activated by glutamate that regulates axon outgrowth through the MAPK-cAMP-PKA signaling pathway during neuronal development. Ligand binding causes a conformation change that triggers signaling via guanine nucleotide-binding proteins (G proteins) and modulates the activity of downstream effectors, such as adenylate cyclase that it inhibits. This Homo sapiens (Human) protein is Metabotropic glutamate receptor 7 (GRM7).